The sequence spans 263 residues: Orotidine 5'-phosphate decarboxylase (263 aa).

Residues aspartate 38, 60–62, 91–100, tyrosine 213, and arginine 232 contribute to the substrate site; these read KTH and DRKFADIGNT. The Proton donor role is filled by lysine 93.

It belongs to the OMP decarboxylase family.

It carries out the reaction orotidine 5'-phosphate + H(+) = UMP + CO2. Its pathway is pyrimidine metabolism; UMP biosynthesis via de novo pathway; UMP from orotate: step 2/2. In Rhizomucor pusillus, this protein is Orotidine 5'-phosphate decarboxylase (PYR4).